Reading from the N-terminus, the 83-residue chain is Cell division topological specificity factor (83 aa).

The protein belongs to the MinE family.

In terms of biological role, prevents the cell division inhibition by proteins MinC and MinD at internal division sites while permitting inhibition at polar sites. This ensures cell division at the proper site by restricting the formation of a division septum at the midpoint of the long axis of the cell. The sequence is that of Cell division topological specificity factor from Acidithiobacillus ferrooxidans (strain ATCC 23270 / DSM 14882 / CIP 104768 / NCIMB 8455) (Ferrobacillus ferrooxidans (strain ATCC 23270)).